The chain runs to 69 residues: MTKPTTEQPTIVKCPTCQSAVVWNAESPFRPFCSKKCQMIDFGEWADEEKSIPGAPDMSDSDGWSEDQY.

Residues Cys14, Cys17, Cys33, and Cys37 each coordinate Zn(2+). The segment at 46–69 is disordered; sequence ADEEKSIPGAPDMSDSDGWSEDQY. Acidic residues predominate over residues 59 to 69; the sequence is SDSDGWSEDQY.

Belongs to the DNA gyrase inhibitor YacG family. Interacts with GyrB. The cofactor is Zn(2+).

In terms of biological role, inhibits all the catalytic activities of DNA gyrase by preventing its interaction with DNA. Acts by binding directly to the C-terminal domain of GyrB, which probably disrupts DNA binding by the gyrase. In Aliivibrio fischeri (strain MJ11) (Vibrio fischeri), this protein is DNA gyrase inhibitor YacG.